The chain runs to 253 residues: tRNA (guanine-N(7)-)-methyltransferase (253 aa).

A compositionally biased stretch (pro residues) spans 1–12 (MSQTPMPQPDQA). The segment at 1-39 (MSQTPMPQPDQAPPVDVGQPVDEAEAKRRRFKTHGRKKG) is disordered. Residues 27–39 (KRRRFKTHGRKKG) are compositionally biased toward basic residues. Glutamate 84, aspartate 109, asparagine 136, and aspartate 159 together coordinate S-adenosyl-L-methionine. Aspartate 159 is an active-site residue. Substrate-binding positions include lysine 163, aspartate 195, and 232–235 (TNFE).

Belongs to the class I-like SAM-binding methyltransferase superfamily. TrmB family.

It catalyses the reaction guanosine(46) in tRNA + S-adenosyl-L-methionine = N(7)-methylguanosine(46) in tRNA + S-adenosyl-L-homocysteine. It participates in tRNA modification; N(7)-methylguanine-tRNA biosynthesis. Functionally, catalyzes the formation of N(7)-methylguanine at position 46 (m7G46) in tRNA. This is tRNA (guanine-N(7)-)-methyltransferase from Magnetococcus marinus (strain ATCC BAA-1437 / JCM 17883 / MC-1).